We begin with the raw amino-acid sequence, 75 residues long: Metallothionein-like protein 1 (75 aa).

The protein belongs to the metallothionein superfamily. Type 15 family.

In terms of biological role, metallothioneins have a high content of cysteine residues that bind various heavy metals. The sequence is that of Metallothionein-like protein 1 from Cicer arietinum (Chickpea).